The primary structure comprises 283 residues: Nucleoid occlusion protein (283 aa).

Residues 1-21 (MKHSFSRFFGFGEKEEEPEIA) are disordered. The H-T-H motif DNA-binding region spans 148–167 (EALAQRLGKGQSTIANKLRL).

The protein belongs to the ParB family.

Its subcellular location is the cytoplasm. The protein resides in the nucleoid. Functionally, effects nucleoid occlusion by binding relatively nonspecifically to DNA and preventing the assembly of the division machinery in the vicinity of the nucleoid, especially under conditions that disturb the cell cycle. It helps to coordinate cell division and chromosome segregation by preventing the formation of the Z ring through the nucleoid, which would cause chromosome breakage. This is Nucleoid occlusion protein from Bacillus velezensis (strain DSM 23117 / BGSC 10A6 / LMG 26770 / FZB42) (Bacillus amyloliquefaciens subsp. plantarum).